We begin with the raw amino-acid sequence, 78 residues long: Large ribosomal subunit protein bL28 (78 aa).

This sequence belongs to the bacterial ribosomal protein bL28 family.

The sequence is that of Large ribosomal subunit protein bL28 from Flavobacterium psychrophilum (strain ATCC 49511 / DSM 21280 / CIP 103535 / JIP02/86).